An 89-amino-acid chain; its full sequence is Large ribosomal subunit protein bL27 (89 aa).

Positions 1 to 20 are disordered; sequence MAHKKAGGSSRNGRDSIGRR.

The protein belongs to the bacterial ribosomal protein bL27 family.

The protein is Large ribosomal subunit protein bL27 of Ruegeria pomeroyi (strain ATCC 700808 / DSM 15171 / DSS-3) (Silicibacter pomeroyi).